A 208-amino-acid chain; its full sequence is Small ribosomal subunit protein uS4 (208 aa).

The region spanning 98–159 is the S4 RNA-binding domain; sequence RRLDNVVYRL…KSRNVAAISE (62 aa).

It belongs to the universal ribosomal protein uS4 family. In terms of assembly, part of the 30S ribosomal subunit. Contacts protein S5. The interaction surface between S4 and S5 is involved in control of translational fidelity.

In terms of biological role, one of the primary rRNA binding proteins, it binds directly to 16S rRNA where it nucleates assembly of the body of the 30S subunit. Functionally, with S5 and S12 plays an important role in translational accuracy. The sequence is that of Small ribosomal subunit protein uS4 from Trichlorobacter lovleyi (strain ATCC BAA-1151 / DSM 17278 / SZ) (Geobacter lovleyi).